The primary structure comprises 104 residues: MSAKIIAFSAVVATASAFAPTAGFVPRLRSGATSVNMAMDKSAKAPVITIFDHRGCSRAPKEYTGAKAGGKDDEMMVKAQSVKIEVSTGTAEGVLATSLAKMTK.

Residues 1-37 constitute a chloroplast transit peptide; that stretch reads MSAKIIAFSAVVATASAFAPTAGFVPRLRSGATSVNM. Residue Lys41 is modified to 5-hydroxylysine. The 15,16-dihydrobiliverdin site is built by Cys56 and Arg58. The 15,16-dihydrobiliverdin chromophore stretch occupies residues 61 to 63; sequence KEY. Lys78 lines the 15,16-dihydrobiliverdin pocket.

Belongs to the phycoerythrin family. As to quaternary structure, heterotetramer of 2 different alpha chains and 2 identical beta chains. The subunit composition could comprise of any combination of 2 out of 4 different alpha units with an invariant beta unit. Contains one covalently linked 15,16-dihydrobiliverdin chromophore.

It is found in the plastid. Its subcellular location is the chloroplast thylakoid membrane. In terms of biological role, light-harvesting photosynthetic tetrapyrrole chromophore-protein from the phycobiliprotein complex. This is Phycoerythrin alpha-2 chain, chloroplastic (cpeA2) from Rhodomonas sp. (strain CS 24) (Chroomonas sp. (strain CS24)).